A 212-amino-acid chain; its full sequence is Response regulator SsrB (212 aa).

The interval 1 to 138 (MKEYKILLVD…PTLNREAILA (138 aa)) is required for prevention of DNA binding in absence of phosphorylation and for full stimulation of activity by acidic pH. The 117-residue stretch at 5 to 121 (KILLVDDHEI…VLLAALQTVA (117 aa)) folds into the Response regulatory domain. 4-aspartylphosphate is present on Asp-56. In terms of domain architecture, HTH luxR-type spans 143 to 208 (DTTNHQLLTL…ELLNCARRMR (66 aa)). The segment at residues 167–186 (NHGISEKLHISIKTVETHRM) is a DNA-binding region (H-T-H motif). Cys-203 is subject to S-nitrosocysteine.

As to quaternary structure, homodimer; disulfide-linked; dimerizes upon DNA-binding. SsrB phosphorylated on Asp-56 activates the expression of virulence genes whereas the unphosphorylated form controls biofilm formation. Independently of SsrA, can be phosphorylated by small inorganic phosphate donors (such as acetyl phosphate or phosphoramidate). In terms of processing, disulfide bond formation at Cys-203 is not required for dimerization. Post-translationally, cys-203 may serve as a redox sensor that is nitrosylated in presence of reactive nitrogen species (RNS) generated by the host, the modification modulates its DNA-binding activity. Cys-203 is relatively resistant to oxidation by hydrogen peroxide.

Its subcellular location is the cytoplasm. Its function is as follows. Member of the two-component regulatory system SsrA/SsrB (SpiR/SsrB) that is required for intracellular proliferation and systemic dissemination within the host. When inside acidic Salmonella-containing vesicles (SCV) within host cells the SsrA sensor kinase autophosphorylates and the phosphoryl group is transferred to the response regulator SsrB; phosphorylated SsrB activates the expression of genes encoding virulence proteins, including pathogenicity island 2 (SPI2) and other horizontally acquired genes, but also ancestral genes; it can stimulate gene expression both by recruiting RNA polymerase and by antagonizing the action of the transcriptional repressor hns (H-NS). Can also act independently of sensor kinase ssrA to support the dormant carrier state by directing the transcription of factors required for biofilm formation. DNA-binding is stimulated by acidic pH conditions, and binding promotes bending of DNA both upstream and downstream of binding sites. Binds a degenerate 18-basepair palindromic sequence with a 7-4-7 internal organization, and regulates gene expression from 86 operons. When phosphorylated, activates the transcription of the ABC transporter complex dalSTUV, which helps protect the organism from oxidative killing by host neutrophils. Binds the phoP promoter to stimulate expression in acidic pH conditions. Antagonizes hns to activate the transcription of ugtL. Following invasion of host cells, binds the hilD and hilA regulatory regions to repress their transcription and consequently to repress transcription of pathogenicity island 1 (SPI1) encoding genes involved in host cell invasion. Binds the promoters of the flagellar master regulators flhD and flhC to repress their expression and consequently to suppress flagellar motility and promote evasion of the host inflammasome during infection of host cells. Activates expression of sseI/srfH, sifA, sifB, sseJ and regulates its own expression. When unphosphorylated, relieves the hns-mediated repression of master biofilm regulator csgD by binding and bending the csgD regulatory region. May act as early as in the lumen of the host small intestine, to activate the expression of virulence proteins prior to invasion of host cells. In Salmonella typhimurium (strain LT2 / SGSC1412 / ATCC 700720), this protein is Response regulator SsrB.